The sequence spans 987 residues: MPSSSDAINRISYISLVTSDNDKFNQTFQFYSQLGFRLTKSFSKVSSYGSGLGANHPEFQLGVSHDSLKEVWLESYPLQNVDSNGNLRPWQEMEVYDGDNCERLNESTVIKVRLLGETPLKSISQKQFVFFTTQLNKIEKILTDANVKYGKVVDNVILAEDPLNNIISFSNTQNELCKTRFQSPEEYVEKTTAEILAKRKKSQLGSKFGSFEEISPSEVGGGNGLRKKKIGVMTSGGDAPGMNPAVRAVVRAGIYYGCDVYAVYEGYEGLVKGGDLLKKMEWSDVRSYMSLGGTSIGTARCKEFRERAGRLQGAYNMIKNGIDALVVCGGDGSLTGADLFRSEWPSLVKELVDTGKLTKEEVSPYEHLTIVGLVGSIDNDMSGTDVTIGAFSALERITEMVDYIGATAASHSRAFVVEVMGRHCGWLALLSGLATGADFVFIPERPPKAGLWKEQLKEVCLRHREYGRRKTTVIVAEGAIDDELNPITSEEVKQVLADLGLDTRNTILGHVQRGGTAVAFDRRLATLQGVEAVKAVLEMTPDTPSPMIGILKHKIVRIPLVDAVKQTKAVAEAISNKDFDKAMSLRDNSFYDDYRYFRDISIYDDGSKQLSEDKRLNIAIVHVGAASAGLNAATRAVALYSLSRGHKLYAVQDGFAGLVKGDLKNLTWMDVEGWHSLGGSEIGTNRSLPSQNIGKVAYNLQKFNIQGLLIVGGFEAFTSLHELSEQKANYPIFEIPMVVVPATVSNNVPGTEYSLGADTCLNQLVSYCDAVQQSASSTRRRVFVVEVQGGHSGYVASYCGLITGALATYTPESNINLRELQGDIDLLQKVFATDRGEDHNGTLIVRNEQASAVYSTQLIADILKENANKRFETRTAIPGHVQQGFTPSANDRVMAVKFSLKAMEFIETRNGCYGKHDRKFSDEEISEHSQVVIGIHGDVVKFTCIKHLYDNEANVALRKGKTVHWTDMIDVANILNGKSLLKKQERY.

Positions 1 to 602 (MPSSSDAINR…DYRYFRDISI (602 aa)) are N-terminal catalytic PFK domain 1. ATP contacts are provided by residues glycine 237, 300–301 (RC), and 330–333 (GDGS). Aspartate 331 is a Mg(2+) binding site. Residues 376-378 (SID), arginine 413, 420-422 (MGR), glutamate 477, arginine 504, and 510-513 (HVQR) each bind beta-D-fructose 6-phosphate. Aspartate 378 acts as the Proton acceptor in catalysis. Residues 603–616 (YDDGSKQLSEDKRL) form an interdomain linker region. Residues 617-987 (NIAIVHVGAA…KSLLKKQERY (371 aa)) form a C-terminal regulatory PFK domain 2 region. Beta-D-fructose 2,6-bisphosphate contacts are provided by residues arginine 686, 743–747 (TVSNN), arginine 781, 788–790 (QGG), glutamate 848, arginine 874, 880–883 (HVQQ), and arginine 958.

It belongs to the phosphofructokinase type A (PFKA) family. ATP-dependent PFK group I subfamily. Eukaryotic two domain clade 'E' sub-subfamily. As to quaternary structure, heterooctamer of 4 alpha and 4 beta chains. It depends on Mg(2+) as a cofactor.

Its subcellular location is the cytoplasm. It catalyses the reaction beta-D-fructose 6-phosphate + ATP = beta-D-fructose 1,6-bisphosphate + ADP + H(+). The protein operates within carbohydrate degradation; glycolysis; D-glyceraldehyde 3-phosphate and glycerone phosphate from D-glucose: step 3/4. Its activity is regulated as follows. Allosterically activated by ADP, AMP, or fructose 2,6-bisphosphate, and allosterically inhibited by ATP or citrate. Its function is as follows. Catalyzes the phosphorylation of D-fructose 6-phosphate to fructose 1,6-bisphosphate by ATP, the first committing step of glycolysis. This Candida albicans (Yeast) protein is ATP-dependent 6-phosphofructokinase subunit alpha (PFK1).